A 140-amino-acid polypeptide reads, in one-letter code: Phosphopantetheine adenylyltransferase (140 aa).

Position 9 (Ser-9) interacts with substrate. Residues 9–10 (SF) and His-17 each bind ATP. Substrate is bound by residues Lys-41, Thr-74, and Arg-88. Residues 89 to 91 (GLR), Glu-99, and 124 to 130 (KRSLSST) each bind ATP.

The protein belongs to the bacterial CoaD family. As to quaternary structure, homohexamer. Requires Mg(2+) as cofactor.

The protein localises to the cytoplasm. It carries out the reaction (R)-4'-phosphopantetheine + ATP + H(+) = 3'-dephospho-CoA + diphosphate. Its pathway is cofactor biosynthesis; coenzyme A biosynthesis; CoA from (R)-pantothenate: step 4/5. Reversibly transfers an adenylyl group from ATP to 4'-phosphopantetheine, yielding dephospho-CoA (dPCoA) and pyrophosphate. The polypeptide is Phosphopantetheine adenylyltransferase (Mycoplasma capricolum subsp. capricolum (strain California kid / ATCC 27343 / NCTC 10154)).